Reading from the N-terminus, the 267-residue chain is MTRIALGIQYDGAAFCGWQSQPHGKTVQDELERALREFALTPLQTVVAGRTDTGVHGLGQVVHFDTELDRAEFSWVRGTNAFLPSTVAVQWAKPMPDAFHARFSAFERTYYYALYVHPVRSPMLASRAGWIHTPLDVDAMREAAACLIGEHDFSAFRSSECQSKTPVKHLYQIDIRPQGDFIHFRFRANAFLHHMVRNLMGCLVAVGRGRYPAAWLSEVLHGRDRNRAAPTFMPDGLYLAQVGYPETFAVPAPQAGSVPWSTVWTDS.

Residue D52 is the Nucleophile of the active site. Residue Y110 coordinates substrate.

Belongs to the tRNA pseudouridine synthase TruA family. In terms of assembly, homodimer.

The catalysed reaction is uridine(38/39/40) in tRNA = pseudouridine(38/39/40) in tRNA. Formation of pseudouridine at positions 38, 39 and 40 in the anticodon stem and loop of transfer RNAs. This Paraburkholderia phymatum (strain DSM 17167 / CIP 108236 / LMG 21445 / STM815) (Burkholderia phymatum) protein is tRNA pseudouridine synthase A.